The chain runs to 169 residues: uncharacterized protein (169 aa).

The transit peptide at 1-91 directs the protein to the mitochondrion; it reads MFSSTFRRLA…NKEQYTVRCL (91 aa). The disordered stretch occupies residues 54-76; the sequence is PQPKSPGSLPSSTRTAPNPNGEE. Over residues 61 to 71 the composition is skewed to polar residues; it reads SLPSSTRTAPN.

It is found in the mitochondrion. This is an uncharacterized protein from Trypanosoma brucei brucei (strain 927/4 GUTat10.1).